We begin with the raw amino-acid sequence, 69 residues long: Small, acid-soluble spore protein I (69 aa).

The protein belongs to the SspI family.

Its subcellular location is the spore core. This Geobacillus kaustophilus (strain HTA426) protein is Small, acid-soluble spore protein I.